The primary structure comprises 319 residues: Ribosomal RNA small subunit methyltransferase H (319 aa).

Residues 37 to 39 (GGY), D57, F96, D105, and Q112 contribute to the S-adenosyl-L-methionine site. Residues 292-302 (RPDEREKERNP) show a composition bias toward basic and acidic residues. The tract at residues 292 to 319 (RPDEREKERNPRSRSARLRAVEKQGVPA) is disordered.

It belongs to the methyltransferase superfamily. RsmH family.

It is found in the cytoplasm. The catalysed reaction is cytidine(1402) in 16S rRNA + S-adenosyl-L-methionine = N(4)-methylcytidine(1402) in 16S rRNA + S-adenosyl-L-homocysteine + H(+). In terms of biological role, specifically methylates the N4 position of cytidine in position 1402 (C1402) of 16S rRNA. The chain is Ribosomal RNA small subunit methyltransferase H from Syntrophobacter fumaroxidans (strain DSM 10017 / MPOB).